A 146-amino-acid polypeptide reads, in one-letter code: Phosphoribosyl-AMP cyclohydrolase (146 aa).

Aspartate 95 is a Mg(2+) binding site. Cysteine 96 is a Zn(2+) binding site. Mg(2+) contacts are provided by aspartate 97 and aspartate 99. Residues cysteine 112 and cysteine 119 each contribute to the Zn(2+) site.

Belongs to the PRA-CH family. As to quaternary structure, homodimer. The cofactor is Mg(2+). Zn(2+) serves as cofactor.

It is found in the cytoplasm. The enzyme catalyses 1-(5-phospho-beta-D-ribosyl)-5'-AMP + H2O = 1-(5-phospho-beta-D-ribosyl)-5-[(5-phospho-beta-D-ribosylamino)methylideneamino]imidazole-4-carboxamide. The protein operates within amino-acid biosynthesis; L-histidine biosynthesis; L-histidine from 5-phospho-alpha-D-ribose 1-diphosphate: step 3/9. In terms of biological role, catalyzes the hydrolysis of the adenine ring of phosphoribosyl-AMP. The sequence is that of Phosphoribosyl-AMP cyclohydrolase from Chromohalobacter salexigens (strain ATCC BAA-138 / DSM 3043 / CIP 106854 / NCIMB 13768 / 1H11).